A 485-amino-acid chain; its full sequence is ATP-dependent rRNA helicase RRP3 (485 aa).

Basic residues predominate over residues 1 to 10 (MPVLKKRKLA). The tract at residues 1–55 (MPVLKKRKLAHTAQPDPIVSDLESSSSEASQQSHDEQLTAANEQDDESPQVQREE) is disordered. The segment covering 20–32 (SDLESSSSEASQQ) has biased composition (low complexity). The short motif at 59 to 87 (KSFKDLGIIDSLCEACEALGYKSPTPIQA) is the Q motif element. The Helicase ATP-binding domain occupies 90-261 (IPLALQGRDL…RASLSNPLRV (172 aa)). 103-110 (AETGSGKT) contacts ATP. The DEAD box motif lies at 209 to 212 (DEAD). One can recognise a Helicase C-terminal domain in the interval 285–433 (YKDIYLVYLL…EYKVEKEEVM (149 aa)). The segment covering 449 to 458 (EMKDLHEKRG) has biased composition (basic and acidic residues). Residues 449–485 (EMKDLHEKRGSRGATLKGRRPAKGAKRGRDEMDREEG) form a disordered region. Basic residues predominate over residues 465 to 474 (KGRRPAKGAK). The segment covering 475 to 485 (RGRDEMDREEG) has biased composition (basic and acidic residues).

This sequence belongs to the DEAD box helicase family. DDX47/RRP3 subfamily. As to quaternary structure, interacts with the SSU processome.

It is found in the nucleus. The catalysed reaction is ATP + H2O = ADP + phosphate + H(+). In terms of biological role, ATP-dependent rRNA helicase required for pre-ribosomal RNA processing. Involved in the maturation of the 35S-pre-rRNA and to its cleavage to mature 18S rRNA. The protein is ATP-dependent rRNA helicase RRP3 of Ajellomyces capsulatus (strain NAm1 / WU24) (Darling's disease fungus).